The primary structure comprises 348 residues: Sesquiterpene synthase MGU_11447 (348 aa).

Residues D91 and D96 each contribute to the Mg(2+) site. A DDXXXD motif motif is present at residues 91–96; the sequence is DDLFVD. R184 provides a ligand contact to substrate. Residues N230, S234, and E238 each contribute to the Mg(2+) site.

It belongs to the terpene synthase family. Mg(2+) is required as a cofactor.

The enzyme catalyses (2E,6E)-farnesyl diphosphate + H2O = (+)-corvol ether B + diphosphate. It catalyses the reaction (2E,6E)-farnesyl diphosphate + H2O = (+)-corvol ether A + diphosphate. In terms of biological role, terpene synthase that catalyzes the conversion of (2E,6E)-farnesyl diphosphate (FPP) into sesquiterpenes which are important for fungi-environment interactions. Produces a mixture consisting of 8 sesquiterpenes including corvol ethers A and B, as well as traces of epizonarene, gamma-cadinene, delta-cadinene, alpha-cadinene, alpha-cadinol, and an unidentified sesquiterpene. Produces both corvol ether A and corvol ether B in similar concentrations. The chain is Sesquiterpene synthase MGU_11447 from Metarhizium guizhouense (strain ARSEF 977).